A 576-amino-acid polypeptide reads, in one-letter code: Vesicular glutamate transporter 1 (576 aa).

At 1-63 the chain is on the cytoplasmic side; sequence MEFRKEEFKK…CTCFGLPRRY (63 aa). A helical transmembrane segment spans residues 64 to 84; sequence IIAIMSGLGFCISFGIRCNLG. The Vesicular portion of the chain corresponds to 85–116; the sequence is VAIVSMVNNNTVYKGNKLVIEQAQFNWDPETV. N-linked (GlcNAc...) asparagine glycosylation is present at N93. A helical transmembrane segment spans residues 117 to 137; that stretch reads GMIHGSFFWGYIVTQIPGGYI. Residues 138-140 lie on the Cytoplasmic side of the membrane; that stretch reads CQK. Residues 141-161 traverse the membrane as a helical segment; sequence FAANRVFGFAIVATSTLNMLI. The Vesicular segment spans residues 162 to 168; it reads PSAARVH. Residues 169-189 traverse the membrane as a helical segment; that stretch reads FACVICVRILQGLVEGVTYPA. The Cytoplasmic portion of the chain corresponds to 190 to 208; the sequence is CHGIWSKWAPPLERSRLAT. Residues 209–229 form a helical membrane-spanning segment; sequence TAFCGSYAGAVVAMPLAGVLV. Over 230-236 the chain is Vesicular; sequence QYSGWSS. The chain crosses the membrane as a helical span at residues 237–257; sequence VFYVYGSFGITWYMFWILVSY. Residues 258–297 are Cytoplasmic-facing; it reads ESPAQHPTISEEERKYIEESIGESTGFMNPMAKFKAPWRK. A helical transmembrane segment spans residues 298-320; that stretch reads FFTSMPVYAIIVANFCRSWTFYL. The Vesicular portion of the chain corresponds to 321–341; sequence LLISQPAYFEEVFGFAISKVG. A helical transmembrane segment spans residues 342 to 362; it reads LLSALPHLVMTIIVPIGGQIA. The Cytoplasmic portion of the chain corresponds to 363–378; the sequence is DFLRTKRIMSTTNVRK. The chain crosses the membrane as a helical span at residues 379–399; the sequence is MMNCGGFGMEATLLLVVGYSH. Residues 400-401 are Vesicular-facing; it reads SR. A helical membrane pass occupies residues 402–422; the sequence is GVAISFLVLAVGFSGFAISGF. Over 423-435 the chain is Cytoplasmic; sequence NVNHLDIAPRYAS. A helical membrane pass occupies residues 436-456; that stretch reads ILMGISNGVGTLSGMVCPLIV. The Vesicular segment spans residues 457–469; sequence GAMTKHKTREEWQ. A helical transmembrane segment spans residues 470–490; that stretch reads YVFLIASLVHYGGVVFYGIFA. The Cytoplasmic segment spans residues 491 to 576; the sequence is SGEKQPWAEP…YGTVAERDLS (86 aa). Positions 517–552 are disordered; it reads ADESEEQTQAHGGYGSYGATQTTSQQNGGWATDWEK. The span at 534 to 545 shows a compositional bias: polar residues; it reads GATQTTSQQNGG.

This sequence belongs to the major facilitator superfamily. Sodium/anion cotransporter family. VGLUT subfamily.

The protein localises to the cytoplasmic vesicle. It localises to the secretory vesicle. Its subcellular location is the synaptic vesicle membrane. The protein resides in the cell membrane. It is found in the synapse. The protein localises to the synaptosome. The enzyme catalyses L-glutamate(out) = L-glutamate(in). It catalyses the reaction chloride(in) = chloride(out). The catalysed reaction is 3 Na(+)(out) + phosphate(out) = 3 Na(+)(in) + phosphate(in). It carries out the reaction phosphate(in) = phosphate(out). The enzyme catalyses K(+)(in) + H(+)(out) = K(+)(out) + H(+)(in). Its activity is regulated as follows. Chloride channel activity is allosterically activated by lumenal H(+) and Cl(-) leading to synaptic vesicles acidification. The L-glutamate transport activity is allosterically activated by lumenal H(+) and Cl(-). The allosteric activation by H(+) efficiently prevents non-vesicular efflux across the plasma membrane, thereby restricting L-glutamate transport activity to acidic membranes such as synaptic vesicles. In terms of biological role, multifunctional transporter that transports L-glutamate as well as multiple ions such as chloride, proton, potassium, sodium and phosphate. At the synaptic vesicle membrane, mainly functions as an uniporter which transports preferentially L-glutamate but also phosphate from the cytoplasm into synaptic vesicles at presynaptic nerve terminals of excitatory neural cells. The L-glutamate or phosphate uniporter activity is electrogenic and is driven by the proton electrochemical gradient, mainly by the electrical gradient established by the vacuolar H(+)-ATPase across the synaptic vesicle membrane. In addition, functions as a chloride channel that allows a chloride permeation through the synaptic vesicle membrane that affects the proton electrochemical gradient and promotes synaptic vesicles acidification. Moreover, may function as a K(+)/H(+) antiport allowing to maintain the electrical gradient and to decrease chemical gradient and therefore sustain vesicular glutamate uptake. The vesicular K(+)/H(+) antiport activity is electroneutral. At the plasma membrane, following exocytosis, functions as a symporter of Na(+) and phosphate from the extracellular space to the cytoplasm allowing synaptic phosphate homeostasis regulation. The symporter activity is driven by an inside negative membrane potential and is electrogenic. Is necessary for synaptic signaling of visual-evoked responses from photoreceptors. The sequence is that of Vesicular glutamate transporter 1 from Xenopus laevis (African clawed frog).